We begin with the raw amino-acid sequence, 740 residues long: E3 ubiquitin-protein ligase DTX3L (740 aa).

A2 is modified (N-acetylalanine). The residue at position 9 (S9) is a Phosphoserine. Disordered stretches follow at residues 96–119 (NTRPQISSLTQSQAETPSGDMHQH), 195–231 (SEQKQQFSPSMTERKPLSQQERDSCISPSEPETKAEQ), and 524–551 (HETPMDIDSDDSKAASPPLKGSVSSEAS). 2 stretches are compositionally biased toward polar residues: residues 98–111 (RPQISSLTQSQAET) and 195–205 (SEQKQQFSPSM). S202 carries the phosphoserine modification. The span at 206 to 218 (TERKPLSQQERDS) shows a compositional bias: basic and acidic residues. Phosphoserine is present on residues S221, S532, and S539. The segment at 561–600 (CVICMDTISNKKVLPKCKHEFCAPCINKAMSYKPICPTCQ) adopts an RING-type zinc-finger fold.

The protein belongs to the Deltex family. Homodimer and heterodimer. Can heterodimerize with DTX1, enhancing its ubiquitin ligase activity in vitro. Interacts (via N-terminus) with ADP ribosyltransferase PARP9/BAL1 (via PARP catalytic domain) forming a stable complex; the interaction is required to activate PARP9 but is dispensable for DTX3L catalytic activity. Forms a complex with STAT1 and PARP9 independently of IFNB1 or IFNG-mediated STAT1 'Tyr-701' phosphorylation. Found in a complex with PARP9, STAT1 and H2BC9. Found in a complex with E3 ligase ITCH and ESCRT-0 components HGS and STAM. Interacts (via C-terminus) with ITCH; the interaction is increased upon CXCL12 stimulation and inhibits ITCH catalytic activity; the interaction is direct. Interacts with HGS and STAM; the interaction brings together HGS and STAM and promotes their recruitment to early endosomes. As to quaternary structure, (Microbial infection) Interacts with encephalomyocarditis virus (EMCV) C3 protease; the interaction results in C3 protease 'Lys-48'-linked ubiquitination. In terms of assembly, (Microbial infection) Interacts with human rhinovirus (HRV) C3 protease; the interaction results in C3 protease 'Lys-48'-linked ubiquitination. Post-translationally, autoubiquitinated.

Its subcellular location is the cytoplasm. It localises to the nucleus. The protein localises to the early endosome membrane. The protein resides in the lysosome membrane. It catalyses the reaction S-ubiquitinyl-[E2 ubiquitin-conjugating enzyme]-L-cysteine + [acceptor protein]-L-lysine = [E2 ubiquitin-conjugating enzyme]-L-cysteine + N(6)-ubiquitinyl-[acceptor protein]-L-lysine.. It functions in the pathway protein modification; protein ubiquitination. Binding to PARP9 enhances DTX3L catalytic activity. E3 ubiquitin-protein ligase which, in association with ADP-ribosyltransferase PARP9, plays a role in DNA damage repair and in interferon-mediated antiviral responses. Monoubiquitinates several histones, including histone H2A, H2B, H3 and H4. In response to DNA damage, mediates monoubiquitination of 'Lys-91' of histone H4 (H4K91ub1). The exact role of H4K91ub1 in DNA damage response is still unclear but it may function as a licensing signal for additional histone H4 post-translational modifications such as H4 'Lys-20' methylation (H4K20me). PARP1-dependent PARP9-DTX3L-mediated ubiquitination promotes the rapid and specific recruitment of 53BP1/TP53BP1, UIMC1/RAP80, and BRCA1 to DNA damage sites. By monoubiquitinating histone H2B H2BC9/H2BJ and thereby promoting chromatin remodeling, positively regulates STAT1-dependent interferon-stimulated gene transcription and thus STAT1-mediated control of viral replication. Independently of its catalytic activity, promotes the sorting of chemokine receptor CXCR4 from early endosome to lysosome following CXCL12 stimulation by reducing E3 ligase ITCH activity and thus ITCH-mediated ubiquitination of endosomal sorting complex required for transport ESCRT-0 components HGS and STAM. In addition, required for the recruitment of HGS and STAM to early endosomes. In association with PARP9, plays a role in antiviral responses by mediating 'Lys-48'-linked ubiquitination of encephalomyocarditis virus (EMCV) and human rhinovirus (HRV) C3 proteases and thus promoting their proteasomal-mediated degradation. The sequence is that of E3 ubiquitin-protein ligase DTX3L (DTX3L) from Homo sapiens (Human).